Reading from the N-terminus, the 439-residue chain is Agmatine coumaroyltransferase-1 (439 aa).

Active-site proton acceptor residues include histidine 152 and aspartate 385.

This sequence belongs to the plant acyltransferase family. In terms of assembly, monomer.

The enzyme catalyses 4-coumaroyl-CoA + agmatine = N-(4-guanidinobutyl)-4-hydroxycinnamamide + CoA + H(+). Inhibited by DEPC. Completely inhibited by ZnSO(4), strongly inhibited by CuSO(4), partially inhibited by MnCl(2). Unaffected by MgCl(2) or CaCl(2). Its function is as follows. Involved in the synthesis of hordatines (antifungal hydroxycinnamoylagmatine derivatives). Specific for agmatine as the acyl acceptor, inactive towards tyramine and putrescine. Has activity with the acyl donors 4-coumaroyl-CoA, cinnamoyl-CoA, caffeoyl-CoA, feruloyl-CoA, and to a lesser extent sinapoyl-CoA. This Hordeum vulgare (Barley) protein is Agmatine coumaroyltransferase-1 (ACT-1).